Reading from the N-terminus, the 620-residue chain is Sodium-dependent dopamine transporter (620 aa).

Over 1–56 (MSKSKCSVGLMSSVVAPAKEPNAMGPKEVELILVKEQNGVQLTSSTLTNPRQSPVE) the chain is Cytoplasmic. Residues 57 to 95 (AQDRETWGKKIDFLLSVIGFAVDLANVWRFPYLCYKNGG) traverse the membrane as a discontinuously helical segment. Positions 75, 77, 78, 79, and 82 each coordinate Na(+). Residue Asp79 participates in dopamine binding. The next 2 helical transmembrane spans lie at 96–127 (GAFL…NREG) and 128–171 (AAGV…FSSF). Residues Ser149 and Gly153 each coordinate dopamine. At 172-236 (TTELPWIHCN…SHGIDDLGPP (65 aa)) the chain is on the extracellular side. A disulfide bridge links Cys180 with Cys189. N-linked (GlcNAc...) asparagine glycans are attached at residues Asn181, Asn188, and Asn205. The next 2 membrane-spanning stretches (helical) occupy residues 237–256 (RWQL…FSLW) and 257–287 (KGVK…GVTL). Residues 288-306 (PGAIDGIRAYLSVDFYRLC) are Extracellular-facing. Residues 307-335 (EASVWIDAATQVCFSLGVGFGVLIAFSSY) traverse the membrane as a discontinuously helical segment. Chloride is bound at residue Gln317. Phe320 contacts dopamine. Na(+) is bound by residues Ser321 and Asn353. Ser321 contributes to the chloride binding site. A helical transmembrane segment spans residues 336 to 376 (NKFTNNCYRDAIVTTSINSLTSFSSGFVVFSFLGYMAQKHS). Ser357 serves as a coordination point for chloride. The Extracellular segment spans residues 377 to 400 (VPIGDVAKDGPGLIFIIYPEAIAT). A run of 3 helical transmembrane segments spans residues 401 to 442 (LPLS…QLLH), 443 to 466 (RHRE…CVTN), and 467 to 499 (GGIY…AWFY). Residues Leu418, Asp421, and Ser422 each contribute to the Na(+) site. Residues Ser422 and Ala423 each coordinate dopamine. The Cytoplasmic portion of the chain corresponds to 500–516 (GVGQFSDDIQQMTGQRP). A helical transmembrane segment spans residues 517–542 (SLYWRLCWKLVSPCFLLFVVVVSIVT). The Extracellular segment spans residues 543-553 (FRPPHYGAYIF). The helical transmembrane segment at 554-583 (PDWANALGWVIATSSMAMVPIYAAYKFCSL) threads the bilayer. The tract at residues 561–590 (GWVIATSSMAMVPIYAAYKFCSLPGSFREK) is interaction with TGFB1I1. Residues 584 to 620 (PGSFREKLAYAIAPEKDRELVDRGEVRQFTLRHWLKV) lie on the Cytoplasmic side of the membrane.

It belongs to the sodium:neurotransmitter symporter (SNF) (TC 2.A.22) family. SLC6A3 subfamily. In terms of assembly, monomer. Homooligomer; disulfide-linked. Interacts with PRKCABP and TGFB1I1. Interacts (via N-terminus) with SYNGR3 (via N-terminus). Interacts with SLC18A2. Interacts with TOR1A (ATP-bound); TOR1A regulates SLC6A3 subcellular location. Interacts with alpha-synuclein/SNCA. Interacts with SEPTIN4.

It localises to the cell membrane. The protein localises to the cell projection. The protein resides in the neuron projection. Its subcellular location is the axon. The enzyme catalyses dopamine(out) + chloride(out) + Na(+)(out) = dopamine(in) + chloride(in) + Na(+)(in). It catalyses the reaction (R)-noradrenaline(out) + chloride(out) + Na(+)(out) = (R)-noradrenaline(in) + chloride(in) + Na(+)(in). The catalysed reaction is dopamine(out) + chloride(out) + 2 Na(+)(out) = dopamine(in) + chloride(in) + 2 Na(+)(in). Its activity is regulated as follows. Inhibited by zinc ions. Mediates sodium- and chloride-dependent transport of dopamine. Also mediates sodium- and chloride-dependent transport of norepinephrine (also known as noradrenaline). Regulator of light-dependent retinal hyaloid vessel regression, downstream of OPN5 signaling. In Macaca fascicularis (Crab-eating macaque), this protein is Sodium-dependent dopamine transporter (SLC6A3).